The sequence spans 380 residues: ATP phosphoribosyltransferase regulatory subunit (380 aa).

The protein belongs to the class-II aminoacyl-tRNA synthetase family. HisZ subfamily. Heteromultimer composed of HisG and HisZ subunits.

Its subcellular location is the cytoplasm. The protein operates within amino-acid biosynthesis; L-histidine biosynthesis; L-histidine from 5-phospho-alpha-D-ribose 1-diphosphate: step 1/9. Its function is as follows. Required for the first step of histidine biosynthesis. May allow the feedback regulation of ATP phosphoribosyltransferase activity by histidine. The chain is ATP phosphoribosyltransferase regulatory subunit from Thermoanaerobacter sp. (strain X514).